Consider the following 295-residue polypeptide: UDP-3-O-acyl-N-acetylglucosamine deacetylase (295 aa).

The Zn(2+) site is built by histidine 75, histidine 232, and aspartate 236. Catalysis depends on histidine 259, which acts as the Proton donor.

This sequence belongs to the LpxC family. The cofactor is Zn(2+).

The catalysed reaction is a UDP-3-O-[(3R)-3-hydroxyacyl]-N-acetyl-alpha-D-glucosamine + H2O = a UDP-3-O-[(3R)-3-hydroxyacyl]-alpha-D-glucosamine + acetate. Its pathway is glycolipid biosynthesis; lipid IV(A) biosynthesis; lipid IV(A) from (3R)-3-hydroxytetradecanoyl-[acyl-carrier-protein] and UDP-N-acetyl-alpha-D-glucosamine: step 2/6. Catalyzes the hydrolysis of UDP-3-O-myristoyl-N-acetylglucosamine to form UDP-3-O-myristoylglucosamine and acetate, the committed step in lipid A biosynthesis. In Helicobacter pylori (strain ATCC 700392 / 26695) (Campylobacter pylori), this protein is UDP-3-O-acyl-N-acetylglucosamine deacetylase.